The primary structure comprises 127 residues: Putative pre-16S rRNA nuclease (127 aa).

Belongs to the YqgF nuclease family.

It localises to the cytoplasm. Functionally, could be a nuclease involved in processing of the 5'-end of pre-16S rRNA. The polypeptide is Putative pre-16S rRNA nuclease (Campylobacter jejuni subsp. jejuni serotype O:6 (strain 81116 / NCTC 11828)).